The chain runs to 507 residues: ATP synthase subunit alpha, chloroplastic (507 aa).

170–177 lines the ATP pocket; sequence GDRQTGKT.

It belongs to the ATPase alpha/beta chains family. In terms of assembly, F-type ATPases have 2 components, CF(1) - the catalytic core - and CF(0) - the membrane proton channel. CF(1) has five subunits: alpha(3), beta(3), gamma(1), delta(1), epsilon(1). CF(0) has four main subunits: a, b, b' and c.

Its subcellular location is the plastid. It localises to the chloroplast thylakoid membrane. It catalyses the reaction ATP + H2O + 4 H(+)(in) = ADP + phosphate + 5 H(+)(out). Produces ATP from ADP in the presence of a proton gradient across the membrane. The alpha chain is a regulatory subunit. The chain is ATP synthase subunit alpha, chloroplastic from Atropa belladonna (Belladonna).